The following is a 546-amino-acid chain: Interleukin-20 receptor subunit alpha (546 aa).

The signal sequence occupies residues 1 to 32 (MHTPGTPAPGHPDPPPLLLLTLLLLLAASGRA). The Extracellular portion of the chain corresponds to 33–253 (VPCVFCGLPK…EVQTSAWKAK (221 aa)). Fibronectin type-III domains lie at 42 to 138 (KPTN…FLET) and 139 to 245 (QVSP…TLEV). N-linked (GlcNAc...) asparagine glycans are attached at residues Asn-45, Asn-86, Asn-94, Asn-185, and Asn-203. Cys-90 and Cys-98 are joined by a disulfide. A disulfide bond links Cys-218 and Cys-239. Residues 254-274 (VIFWYVFLTSVIVFLFSAIGY) traverse the membrane as a helical segment. The Cytoplasmic portion of the chain corresponds to 275-546 (LVYRYIHVGK…EWGLHVQMES (272 aa)).

This sequence belongs to the type II cytokine receptor family. Heterodimer with IL20RB and heterodimer with IL10RB.

The protein localises to the membrane. In terms of biological role, the IL20RA/IL20RB dimer is a receptor for IL19, IL20 and IL24. The IL20RA/IL10RB dimer is a receptor for IL26. The sequence is that of Interleukin-20 receptor subunit alpha (Il20ra) from Mus musculus (Mouse).